Consider the following 562-residue polypeptide: Dihydroxy-acid dehydratase (562 aa).

Residue Cys-55 participates in [2Fe-2S] cluster binding. A Mg(2+)-binding site is contributed by Asp-87. Position 128 (Cys-128) interacts with [2Fe-2S] cluster. Mg(2+)-binding residues include Asp-129 and Lys-130. At Lys-130 the chain carries N6-carboxylysine. Cys-200 provides a ligand contact to [2Fe-2S] cluster. Residue Glu-451 participates in Mg(2+) binding. The Proton acceptor role is filled by Ser-477.

It belongs to the IlvD/Edd family. Homodimer. It depends on [2Fe-2S] cluster as a cofactor. Mg(2+) serves as cofactor.

The catalysed reaction is (2R)-2,3-dihydroxy-3-methylbutanoate = 3-methyl-2-oxobutanoate + H2O. It catalyses the reaction (2R,3R)-2,3-dihydroxy-3-methylpentanoate = (S)-3-methyl-2-oxopentanoate + H2O. Its pathway is amino-acid biosynthesis; L-isoleucine biosynthesis; L-isoleucine from 2-oxobutanoate: step 3/4. It participates in amino-acid biosynthesis; L-valine biosynthesis; L-valine from pyruvate: step 3/4. Functions in the biosynthesis of branched-chain amino acids. Catalyzes the dehydration of (2R,3R)-2,3-dihydroxy-3-methylpentanoate (2,3-dihydroxy-3-methylvalerate) into 2-oxo-3-methylpentanoate (2-oxo-3-methylvalerate) and of (2R)-2,3-dihydroxy-3-methylbutanoate (2,3-dihydroxyisovalerate) into 2-oxo-3-methylbutanoate (2-oxoisovalerate), the penultimate precursor to L-isoleucine and L-valine, respectively. This Cytophaga hutchinsonii (strain ATCC 33406 / DSM 1761 / CIP 103989 / NBRC 15051 / NCIMB 9469 / D465) protein is Dihydroxy-acid dehydratase.